A 776-amino-acid polypeptide reads, in one-letter code: Probable E3 ubiquitin-protein ligase HECTD2 (776 aa).

The tract at residues 1–46 is disordered; that stretch reads MSEAVRVPSPATPLVVAAPAPEERKGKESEREKLPPIVSAGAGATA. Residues 7–20 are compositionally biased toward low complexity; the sequence is VPSPATPLVVAAPA. Residue Ser9 is modified to Phosphoserine. A compositionally biased stretch (basic and acidic residues) spans 21–34; the sequence is PEERKGKESEREKL. An HECT domain is found at 437 to 776; it reads KRADLKKKLK…ISNSEGFGLE (340 aa). Cys744 functions as the Glycyl thioester intermediate in the catalytic mechanism.

The catalysed reaction is S-ubiquitinyl-[E2 ubiquitin-conjugating enzyme]-L-cysteine + [acceptor protein]-L-lysine = [E2 ubiquitin-conjugating enzyme]-L-cysteine + N(6)-ubiquitinyl-[acceptor protein]-L-lysine.. It functions in the pathway protein modification; protein ubiquitination. In terms of biological role, E3 ubiquitin-protein ligase which accepts ubiquitin from an E2 ubiquitin-conjugating enzyme in the form of a thioester and then directly transfers the ubiquitin to targeted substrates. Its function is as follows. (Microbial infection) Catalyzes ubiquitination of Botulinum neurotoxin A light chain (LC) of C.botulinum neurotoxin type A (BoNT/A). The sequence is that of Probable E3 ubiquitin-protein ligase HECTD2 from Homo sapiens (Human).